Consider the following 141-residue polypeptide: MAKKVTAVIKLALQAGKANPAPPVGPALGQHGVNIMMFCKEYNARTQDKAGFVIPVEISVYEDRSFTFITKTPPASVLITKAAKIEKGSGESAKGNVGSINRAQLEEIAKTKLPDLNCTSVESAMRIIEGTARNMGVSISD.

It belongs to the universal ribosomal protein uL11 family. Part of the ribosomal stalk of the 50S ribosomal subunit. Interacts with L10 and the large rRNA to form the base of the stalk. L10 forms an elongated spine to which L12 dimers bind in a sequential fashion forming a multimeric L10(L12)X complex. In terms of processing, one or more lysine residues are methylated.

In terms of biological role, forms part of the ribosomal stalk which helps the ribosome interact with GTP-bound translation factors. The chain is Large ribosomal subunit protein uL11 from Parasynechococcus marenigrum (strain WH8102).